A 186-amino-acid chain; its full sequence is Peptidyl-tRNA hydrolase (186 aa).

TRNA is bound at residue tyrosine 16. Histidine 21 (proton acceptor) is an active-site residue. TRNA-binding residues include tyrosine 66, asparagine 68, and asparagine 114.

It belongs to the PTH family. As to quaternary structure, monomer.

Its subcellular location is the cytoplasm. It carries out the reaction an N-acyl-L-alpha-aminoacyl-tRNA + H2O = an N-acyl-L-amino acid + a tRNA + H(+). Hydrolyzes ribosome-free peptidyl-tRNAs (with 1 or more amino acids incorporated), which drop off the ribosome during protein synthesis, or as a result of ribosome stalling. Functionally, catalyzes the release of premature peptidyl moieties from peptidyl-tRNA molecules trapped in stalled 50S ribosomal subunits, and thus maintains levels of free tRNAs and 50S ribosomes. The chain is Peptidyl-tRNA hydrolase from Ureaplasma parvum serovar 3 (strain ATCC 700970).